The primary structure comprises 221 residues: Chaperone protein TorD (221 aa).

It belongs to the TorD/DmsD family. TorD subfamily.

It is found in the cytoplasm. Involved in the biogenesis of TorA. Acts on TorA before the insertion of the molybdenum cofactor and, as a result, probably favors a conformation of the apoenzyme that is competent for acquiring the cofactor. This Shewanella pealeana (strain ATCC 700345 / ANG-SQ1) protein is Chaperone protein TorD.